The primary structure comprises 435 residues: uncharacterized protein (435 aa).

Serine 47 is modified (phosphoserine). 2 disordered regions span residues 174–210 and 290–372; these read LKKKKESIKTAQTTEAQGADHNEEDEEDEEDEEDDED and KAEA…EDNK. Residues 195–210 are compositionally biased toward acidic residues; the sequence is NEEDEEDEEDEEDDED. Over residues 290–304 the composition is skewed to basic and acidic residues; sequence KAEATGEAHSKDVSA. The segment covering 308–318 has biased composition (polar residues); sequence SANTTTSFDET. 2 stretches are compositionally biased toward basic and acidic residues: residues 322 to 340 and 347 to 361; these read EDEKPKSEGAEEESKKEAN and VADRKEDLKSNKVND.

It localises to the cytoplasm. This is an uncharacterized protein from Saccharomyces cerevisiae (strain ATCC 204508 / S288c) (Baker's yeast).